Here is a 267-residue protein sequence, read N- to C-terminus: Hydroxynaphthalene reductase-like protein Arp2 (267 aa).

Residues isoleucine 25, asparagine 45, aspartate 71, and asparagine 98 each contribute to the NADP(+) site. Active-site proton donor residues include serine 147 and serine 148. 4 residues coordinate NADP(+): tyrosine 162, lysine 166, valine 195, and threonine 197. Tyrosine 162 serves as the catalytic Proton acceptor. The Lowers pKa of active site Tyr role is filled by lysine 166.

This sequence belongs to the short-chain dehydrogenases/reductases (SDR) family.

Its function is as follows. Hydroxynaphthalene reductase-like protein; part of the Pks2 gene cluster that mediates the formation of infectious structures (appressoria), enabling these fungi to kill insects faster. The product of the Pks2 gene cluster is different from the one of Pks1 and has still not been identified. This is Hydroxynaphthalene reductase-like protein Arp2 from Metarhizium guizhouense (strain ARSEF 977).